Consider the following 634-residue polypeptide: SPARC-like protein 1 (634 aa).

The N-terminal stretch at 1 to 16 is a signal peptide; sequence MKAVLLLLYALGIAAA. The segment at 50–335 is disordered; the sequence is ADIEKHPNHK…DDSKHGASDD (286 aa). Residues 51 to 62 show a composition bias toward basic and acidic residues; the sequence is DIEKHPNHKAEK. Ser-68, Ser-76, and Ser-84 each carry phosphoserine. The span at 73–83 shows a compositional bias: basic and acidic residues; that stretch reads HEQSTEQDKTY. Acidic residues predominate over residues 89-99; the sequence is LKDEEDGDGDL. Residues 131-144 show a composition bias toward polar residues; the sequence is TVSTPFVDSDQPAN. N-linked (GlcNAc...) asparagine glycosylation occurs at Asn-144. Phosphoserine occurs at positions 151 and 159. Composition is skewed to acidic residues over residues 189–198 and 205–214; these read EKEEEEDPED and NQEEEKEPPE. Residues 233 to 258 are compositionally biased toward polar residues; the sequence is QESSQPTQISKTKNDFEQGSQGQEGD. Residue Ser-259 is modified to Phosphoserine. Composition is skewed to basic and acidic residues over residues 263-276 and 292-303; these read GEDK…HLPH and GNRKDTDEEKAV. A phosphoserine mark is found at Ser-333 and Ser-340. Residues 360–398 form a disordered region; the sequence is EETPDESENRSEAGDNQGAKKAESSPNAEPSDEGNSRGH. The span at 366–382 shows a compositional bias: basic and acidic residues; the sequence is SENRSEAGDNQGAKKAE. Asn-368 carries N-linked (GlcNAc...) asparagine glycosylation. Phosphoserine is present on residues Ser-370 and Ser-390. One can recognise a Follistatin-like domain in the interval 402–424; that stretch reads SCMNFQCKRGHTCKTDQHGKPHC. 7 cysteine pairs are disulfide-bonded: Cys-403/Cys-414, Cys-408/Cys-424, Cys-426/Cys-460, Cys-432/Cys-453, Cys-442/Cys-479, Cys-485/Cys-596, and Cys-604/Cys-620. A Kazal-like domain is found at 420–481; the sequence is GKPHCVCQDP…QLDYFGACKS (62 aa). The N-linked (GlcNAc...) asparagine glycan is linked to Asn-446. The EF-hand domain maps to 592-627; the sequence is PMEHCITRFFEECDPNKDKHITLKEWGHCFGIKEED. Residues Asp-605, Asn-607, Asp-609, His-611, and Glu-616 each contribute to the Ca(2+) site.

The protein belongs to the SPARC family. As to expression, expressed in many types of neurons in the brain.

The protein localises to the secreted. The protein resides in the extracellular space. It localises to the extracellular matrix. The chain is SPARC-like protein 1 (Sparcl1) from Rattus norvegicus (Rat).